A 95-amino-acid polypeptide reads, in one-letter code: Fatty acid-binding protein, liver (95 aa).

N6-succinyllysine occurs at positions 13 and 18. Position 21 is a phosphoserine (S21). An N6-succinyllysine modification is found at K28. T33 is modified (phosphothreonine). A Phosphoserine modification is found at S38. 3 positions are modified to N6-succinyllysine: K39, K47, and K59. S69 carries the phosphoserine modification. N6-succinyllysine is present on K90.

This sequence belongs to the calycin superfamily. Fatty-acid binding protein (FABP) family. As to quaternary structure, monomer.

Its subcellular location is the cytoplasm. Functionally, this protein binds free fatty acids and their coenzyme A derivatives, bilirubin, and some other small molecules in the cytoplasm; it may be involved in intracellular lipid transport. This Chaetophractus villosus (South American armadillo) protein is Fatty acid-binding protein, liver (FABP1).